The primary structure comprises 110 residues: UPF0145 protein Blon_0093/BLIJ_0092 (110 aa).

Belongs to the UPF0145 family.

This is UPF0145 protein Blon_0093/BLIJ_0092 from Bifidobacterium longum subsp. infantis (strain ATCC 15697 / DSM 20088 / JCM 1222 / NCTC 11817 / S12).